A 209-amino-acid chain; its full sequence is FMN-dependent NADH:quinone oxidoreductase (209 aa).

FMN-binding positions include S9 and 15–17 (SNS).

The protein belongs to the azoreductase type 1 family. In terms of assembly, homodimer. Requires FMN as cofactor.

The catalysed reaction is 2 a quinone + NADH + H(+) = 2 a 1,4-benzosemiquinone + NAD(+). The enzyme catalyses N,N-dimethyl-1,4-phenylenediamine + anthranilate + 2 NAD(+) = 2-(4-dimethylaminophenyl)diazenylbenzoate + 2 NADH + 2 H(+). In terms of biological role, quinone reductase that provides resistance to thiol-specific stress caused by electrophilic quinones. Also exhibits azoreductase activity. Catalyzes the reductive cleavage of the azo bond in aromatic azo compounds to the corresponding amines. The protein is FMN-dependent NADH:quinone oxidoreductase of Bordetella parapertussis (strain 12822 / ATCC BAA-587 / NCTC 13253).